Reading from the N-terminus, the 274-residue chain is Diaminopimelate epimerase (274 aa).

Substrate is bound by residues asparagine 11, glutamine 44, and asparagine 64. The active-site Proton donor is cysteine 73. Residues 74–75, asparagine 157, asparagine 190, and 208–209 each bind substrate; these read GN and ER. Cysteine 217 acts as the Proton acceptor in catalysis. Position 218-219 (218-219) interacts with substrate; that stretch reads GS.

The protein belongs to the diaminopimelate epimerase family. As to quaternary structure, homodimer.

It is found in the cytoplasm. It carries out the reaction (2S,6S)-2,6-diaminopimelate = meso-2,6-diaminopimelate. It participates in amino-acid biosynthesis; L-lysine biosynthesis via DAP pathway; DL-2,6-diaminopimelate from LL-2,6-diaminopimelate: step 1/1. In terms of biological role, catalyzes the stereoinversion of LL-2,6-diaminopimelate (L,L-DAP) to meso-diaminopimelate (meso-DAP), a precursor of L-lysine and an essential component of the bacterial peptidoglycan. This chain is Diaminopimelate epimerase, found in Yersinia enterocolitica serotype O:8 / biotype 1B (strain NCTC 13174 / 8081).